The sequence spans 240 residues: 4-hydroxy-tetrahydrodipicolinate reductase (240 aa).

NAD(+) is bound by residues 79-81 (ATT) and 103-106 (SANM). The active-site Proton donor/acceptor is histidine 135. Residue histidine 136 coordinates (S)-2,3,4,5-tetrahydrodipicolinate. The active-site Proton donor is lysine 139. Residue 145 to 146 (GT) coordinates (S)-2,3,4,5-tetrahydrodipicolinate.

Belongs to the DapB family.

It is found in the cytoplasm. The catalysed reaction is (S)-2,3,4,5-tetrahydrodipicolinate + NAD(+) + H2O = (2S,4S)-4-hydroxy-2,3,4,5-tetrahydrodipicolinate + NADH + H(+). It catalyses the reaction (S)-2,3,4,5-tetrahydrodipicolinate + NADP(+) + H2O = (2S,4S)-4-hydroxy-2,3,4,5-tetrahydrodipicolinate + NADPH + H(+). It participates in amino-acid biosynthesis; L-lysine biosynthesis via DAP pathway; (S)-tetrahydrodipicolinate from L-aspartate: step 4/4. In terms of biological role, catalyzes the conversion of 4-hydroxy-tetrahydrodipicolinate (HTPA) to tetrahydrodipicolinate. The protein is 4-hydroxy-tetrahydrodipicolinate reductase of Staphylococcus aureus (strain JH1).